The sequence spans 581 residues: La-related protein 7 (581 aa).

Met-1 carries the post-translational modification N-acetylmethionine. Residues 1–10 (METESGNQKN) are compositionally biased toward polar residues. Disordered regions lie at residues 1–28 (METE…KKKR), 188–368 (NPPE…ERHK), and 410–440 (KSES…CPTQ). Positions 28–122 (RSRVKQVLAD…KPLGERPKDE (95 aa)) constitute an HTH La-type RNA-binding domain. An RRM domain is found at 125–203 (RTVYVELLPK…PRKPGIFPKT (79 aa)). Residues 219-228 (KKKKKKKGRM) show a composition bias toward basic residues. Over residues 229-240 (KKEDNVQAKEEN) the composition is skewed to basic and acidic residues. Lys-237 participates in a covalent cross-link: Glycyl lysine isopeptide (Lys-Gly) (interchain with G-Cter in SUMO2). At Thr-257 the chain carries Phosphothreonine. Phosphoserine occurs at positions 258, 261, 273, 298, 299, and 300. A compositionally biased stretch (basic and acidic residues) spans 316–335 (IQKDIIKEPSEASKENRDIE). Ser-337 is modified (phosphoserine). Thr-338 is subject to Phosphothreonine. The residue at position 351 (Ser-351) is a Phosphoserine. Over residues 354 to 367 (KTKRKHKKKHKERH) the composition is skewed to basic residues. Lys-410 is covalently cross-linked (Glycyl lysine isopeptide (Lys-Gly) (interchain with G-Cter in SUMO2)). Residues 449–562 (QFVSGVIVKI…TEKLITKAEK (114 aa)) form the xRRM domain.

Belongs to the LARP7 family. Core component of the 7SK RNP complex, at least composed of 7SK RNA, LARP7, MEPCE, HEXIM1 (or HEXIM2) and P-TEFb (composed of CDK9 and CCNT1/cyclin-T1). Interacts with METTL16. Interacts with RBM7; upon genotoxic stress this interaction is enhanced, triggering the release of inactive P-TEFb complex from the core, yielding to P-TEFb complex activation. Associates with box C/D small nucleolar ribonucleoprotein (snoRNP) complexes.

Its subcellular location is the nucleus. The protein localises to the nucleoplasm. Functionally, RNA-binding protein that specifically binds distinct small nuclear RNA (snRNAs) and regulates their processing and function. Specifically binds the 7SK snRNA (7SK RNA) and acts as a core component of the 7SK ribonucleoprotein (RNP) complex, thereby acting as a negative regulator of transcription elongation by RNA polymerase II. The 7SK RNP complex sequesters the positive transcription elongation factor b (P-TEFb) in a large inactive 7SK RNP complex preventing RNA polymerase II phosphorylation and subsequent transcriptional elongation. The 7SK RNP complex also promotes snRNA gene transcription by RNA polymerase II via interaction with the little elongation complex (LEC). LARP7 specifically binds to the highly conserved 3'-terminal U-rich stretch of 7SK RNA; on stimulation, remains associated with 7SK RNA, whereas P-TEFb is released from the complex. LARP7 also acts as a regulator of mRNA splicing fidelity by promoting U6 snRNA processing. Specifically binds U6 snRNAs and associates with a subset of box C/D RNP complexes: promotes U6 snRNA 2'-O-methylation by facilitating U6 snRNA loading into box C/D RNP complexes. U6 snRNA 2'-O-methylation is required for mRNA splicing fidelity. Binds U6 snRNAs with a 5'-CAGGG-3' sequence motif. U6 snRNA processing is required for spermatogenesis. In Macaca fascicularis (Crab-eating macaque), this protein is La-related protein 7.